Reading from the N-terminus, the 134-residue chain is ATP synthase epsilon chain (134 aa).

The protein belongs to the ATPase epsilon chain family. As to quaternary structure, F-type ATPases have 2 components, CF(1) - the catalytic core - and CF(0) - the membrane proton channel. CF(1) has five subunits: alpha(3), beta(3), gamma(1), delta(1), epsilon(1). CF(0) has three main subunits: a, b and c.

Its subcellular location is the cell inner membrane. Produces ATP from ADP in the presence of a proton gradient across the membrane. The protein is ATP synthase epsilon chain of Nitratidesulfovibrio vulgaris (strain ATCC 29579 / DSM 644 / CCUG 34227 / NCIMB 8303 / VKM B-1760 / Hildenborough) (Desulfovibrio vulgaris).